Here is a 440-residue protein sequence, read N- to C-terminus: Streptokinase A (440 aa).

The N-terminal stretch at Met-1 to Ala-26 is a signal peptide.

Functionally, this protein is not a protease, but it activates plasminogen by complexing with it. As a potential virulence factor, it is thought to prevent the formation of effective fibrin barriers around the site of infection, thereby contributing to the invasiveness of the cells. This chain is Streptokinase A (ska), found in Streptococcus pyogenes serotype M1.